A 339-amino-acid polypeptide reads, in one-letter code: MO25-like protein 3 (339 aa).

This sequence belongs to the Mo25 family.

The protein is MO25-like protein 3 (mop-25.3) of Caenorhabditis elegans.